A 728-amino-acid polypeptide reads, in one-letter code: MDIIHHFHNGQTIFDIMMTRIINNRNFQRMIDLEAPHTKQCYFTILNEQETISNVPVGTGLCVFTYHPQNRISFDELNRIFKYTNDGVYLRQVFLPTHIPRHYKCRINDQQYTNMVILGKRYDLRKSETYIELIQLGLDVISDVNVIYWTSKQNYIDATKYLISIGANIKTAIYSASKFGNLDLIISIIDGKNKDIILTAVKCMIADYHLDLAKEMISIYSELLGTEVVELTTYLESNSKLVKSTKSTKSSGSPKSIKPKKSNQNNNAKINVSQNDNSTICFDKKVQQNEITVDKMSSAKEQALNVYKEIENMENFILNKINITKKKALDKIKEIENIENTVVEKLEDKITKSNVSITNTDTITQAIISENLNSLDLLIRQGYDINKILYLACINNKKNVIDYLIDNKGANYEQVHKQLLDSKHHYKNDSTVKYLAKIIMTKSQFENVTDTDEIQQVSKKHYFKEPIHIPLGLGKDDDLSPIMVACRASKNDDQLDLVKMLVSYGFNINSRDKIGRSALHYAVNGSNRKIIEYLLALGADYSFRDNNGDTPMMLAKKSNNLELLDLFQSVPKDTKTIEPKKVTNTTDKTNLNQDIKTAMSICLSSINDNQFESVQKLIMSGFNVSSKDDTKKTLLHMAVVNNNLRIVELLINSGININSQDNLGKTPLMLACQYSHRDSKLAIVEFLLNNNAKILIKAKNNMTAIDLMSKTYNNNIYNLLCERLSINH.

ANK repeat units lie at residues 142–171 and 173–198; these read SDVN…NIKT and IYSA…DIIL. Low complexity predominate over residues 244 to 267; it reads STKSTKSSGSPKSIKPKKSNQNNN. Residues 244–271 are disordered; that stretch reads STKSTKSSGSPKSIKPKKSNQNNNAKIN. A coiled-coil region spans residues 292–338; sequence TVDKMSSAKEQALNVYKEIENMENFILNKINITKKKALDKIKEIENI. 8 ANK repeats span residues 358 to 383, 384 to 414, 477 to 510, 514 to 543, 547 to 576, 594 to 626, 630 to 659, and 663 to 696; these read TNTD…RQGY, DINK…NYEQ, DDLS…NINS, IGRS…DYSF, NGDT…DTKT, DIKT…NVSS, TKKT…NINS, and LGKT…KILI.

In Acanthamoeba polyphaga (Amoeba), this protein is Putative ankyrin repeat protein L271.